The chain runs to 260 residues: tRNA pseudouridine synthase B (260 aa).

His44 is a substrate binding site. Asp49 acts as the Nucleophile in catalysis. Residues Tyr77, Tyr180, and Leu201 each contribute to the substrate site.

Belongs to the pseudouridine synthase TruB family. Type 1 subfamily.

It carries out the reaction uridine(55) in tRNA = pseudouridine(55) in tRNA. Responsible for synthesis of pseudouridine from uracil-55 in the psi GC loop of transfer RNAs. The chain is tRNA pseudouridine synthase B from Blochmanniella pennsylvanica (strain BPEN).